Consider the following 298-residue polypeptide: Probable tRNA(His) guanylyltransferase (298 aa).

Mg(2+)-binding residues include Asp-58, Gly-59, and Asp-105. Residues 58–63 and 104–105 each bind GTP; these read DGRNFH and SD.

Belongs to the tRNA(His) guanylyltransferase family. In terms of assembly, homotetramer. Interacts with MFN1 and MFN2; functions as a guanyl-nucleotide exchange factor/GEF for MFN2 and also probably MFN1. It depends on Mg(2+) as a cofactor. Expressed in many tissues.

It is found in the cytoplasm. Its subcellular location is the mitochondrion outer membrane. It catalyses the reaction a 5'-end ribonucleotide-tRNA(His) + GTP + ATP + H2O = a 5'-end phospho-guanosine-ribonucleotide-tRNA(His) + AMP + 2 diphosphate + H(+). Adds a GMP to the 5'-end of tRNA(His) after transcription and RNase P cleavage. This step is essential for proper recognition of the tRNA and for the fidelity of protein synthesis. Also functions as a guanyl-nucleotide exchange factor/GEF for the MFN1 and MFN2 mitofusins thereby regulating mitochondrial fusion. By regulating both mitochondrial dynamics and bioenergetic function, it contributes to cell survival following oxidative stress. In Homo sapiens (Human), this protein is Probable tRNA(His) guanylyltransferase (THG1L).